Consider the following 724-residue polypeptide: Ribosomal RNA large subunit methyltransferase K/L (724 aa).

One can recognise a THUMP domain in the interval 42 to 153 (DAQRLVLWSR…KGRATLSVDL (112 aa)).

Belongs to the methyltransferase superfamily. RlmKL family.

It is found in the cytoplasm. It carries out the reaction guanosine(2445) in 23S rRNA + S-adenosyl-L-methionine = N(2)-methylguanosine(2445) in 23S rRNA + S-adenosyl-L-homocysteine + H(+). The enzyme catalyses guanosine(2069) in 23S rRNA + S-adenosyl-L-methionine = N(2)-methylguanosine(2069) in 23S rRNA + S-adenosyl-L-homocysteine + H(+). Specifically methylates the guanine in position 2445 (m2G2445) and the guanine in position 2069 (m7G2069) of 23S rRNA. This Xylella fastidiosa (strain 9a5c) protein is Ribosomal RNA large subunit methyltransferase K/L.